The chain runs to 209 residues: MTKKPIVVGVTGGSGSGKTSVTKAICDHFSGHSILMIAQDVYYHDQANISFEDRLKVNYDHPLAFDTDLLISHIAALRRYETIEKPIYDYAKYTRKKEVEIQEPREVIILEGILILEDKRLRDLMDIKVYVDTDDDIRFIRRLLRDMKERGRTMDSVIEQYLSVVKPMHNEFIEPTKKFADIIIPEGGENHVAIDLMTTKIESILQKHV.

12–19 (GGSGSGKT) contributes to the ATP binding site.

This sequence belongs to the uridine kinase family.

It is found in the cytoplasm. It catalyses the reaction uridine + ATP = UMP + ADP + H(+). The catalysed reaction is cytidine + ATP = CMP + ADP + H(+). Its pathway is pyrimidine metabolism; CTP biosynthesis via salvage pathway; CTP from cytidine: step 1/3. It participates in pyrimidine metabolism; UMP biosynthesis via salvage pathway; UMP from uridine: step 1/1. This chain is Uridine kinase, found in Listeria monocytogenes serotype 4b (strain CLIP80459).